The following is a 760-amino-acid chain: Pentatricopeptide repeat-containing protein At1g20230 (760 aa).

PPR repeat units follow at residues 49–79 (DGYISAKLIASYSNYNCFNDADLVLQSIPDP), 80–114 (TIYSFSSLIYALTKAKLFTQSIGVFSRMFSHGLIP), 115–149 (DSHVLPNLFKVCAELSAFKVGKQIHCVSCVSGLDM), 150–180 (DAFVQGSMFHMYMRCGRMGDARKVFDRMSDK), 181–215 (DVVTCSALLCAYARKGCLEEVVRILSEMESSGIEA), 216–250 (NIVSWNGILSGFNRSGYHKEAVVMFQKIHHLGFCP), 251–285 (DQVTVSSVLPSVGDSEMLNMGRLIHGYVIKQGLLK), 286–316 (DKCVISAMIDMYGKSGHVYGIISLFNQFEMM), 317–351 (EAGVCNAYITGLSRNGLVDKALEMFELFKEQTMEL), 352–386 (NVVSWTSIIAGCAQNGKDIEALELFREMQVAGVKP), 387–421 (NHVTIPSMLPACGNIAALGHGRSTHGFAVRVHLLD), 422–452 (NVHVGSALIDMYAKCGRINLSQIVFNMMPTK), 453–487 (NLVCWNSLMNGFSMHGKAKEVMSIFESLMRTRLKP), 488–523 (DFISFTSLLSACGQVGLTDEGWKYFKMMSEEYGIKP), and 524–554 (RLEHYSCMVNLLGRAGKLQEAYDLIKEMPFE). The type E motif stretch occupies residues 559–634 (VWGALLNSCR…NPGCSWIQVK (76 aa)). A type E(+) motif region spans residues 635–665 (NRVYTLLAGDKSHPQIDQITEKMDEISKEMR). The interval 666–760 (KSGHRPNLDF…DGICSCGDFW (95 aa)) is type DYW motif.

The protein belongs to the PPR family. PCMP-H subfamily.

The protein is Pentatricopeptide repeat-containing protein At1g20230 (PCMP-H21) of Arabidopsis thaliana (Mouse-ear cress).